A 215-amino-acid chain; its full sequence is Thiopurine S-methyltransferase (215 aa).

4 residues coordinate S-adenosyl-L-methionine: tryptophan 10, leucine 45, glutamate 66, and arginine 123.

It belongs to the class I-like SAM-binding methyltransferase superfamily. TPMT family.

It localises to the cytoplasm. It carries out the reaction S-adenosyl-L-methionine + a thiopurine = S-adenosyl-L-homocysteine + a thiopurine S-methylether.. The polypeptide is Thiopurine S-methyltransferase (Pseudomonas putida (strain W619)).